A 353-amino-acid chain; its full sequence is Dihydroorotate dehydrogenase (quinone) (353 aa).

FMN is bound by residues 67–71 (AGFDK) and Thr-91. Lys-71 contributes to the substrate binding site. 116-120 (NRMGF) contacts substrate. 2 residues coordinate FMN: Asn-144 and Asn-177. Residue Asn-177 participates in substrate binding. The active-site Nucleophile is the Ser-180. Asn-182 contributes to the substrate binding site. FMN contacts are provided by Lys-215 and Thr-243. 244 to 245 (NT) provides a ligand contact to substrate. FMN contacts are provided by residues Gly-264, Gly-293, and 314–315 (YT).

The protein belongs to the dihydroorotate dehydrogenase family. Type 2 subfamily. Monomer. The cofactor is FMN.

The protein localises to the cell membrane. It catalyses the reaction (S)-dihydroorotate + a quinone = orotate + a quinol. It functions in the pathway pyrimidine metabolism; UMP biosynthesis via de novo pathway; orotate from (S)-dihydroorotate (quinone route): step 1/1. Functionally, catalyzes the conversion of dihydroorotate to orotate with quinone as electron acceptor. The protein is Dihydroorotate dehydrogenase (quinone) of Gloeobacter violaceus (strain ATCC 29082 / PCC 7421).